Consider the following 74-residue polypeptide: Dermaseptin-B3 (74 aa).

Positions 1 to 22 are cleaved as a signal peptide; sequence MAFLKKSVFLVLFLGLVSLSIC. A propeptide spanning residues 23-43 is cleaved from the precursor; sequence EEEKREEENEEKQEDDEQSEE.

As to expression, expressed by the skin glands.

It is found in the secreted. In terms of biological role, possesses a potent antimicrobial activity against Gram-positive and Gram-negative bacteria. Probably acts by disturbing membrane functions with its amphipathic structure. The polypeptide is Dermaseptin-B3 (Phyllomedusa bicolor (Two-colored leaf frog)).